The sequence spans 241 residues: Ribonuclease HII (241 aa).

The region spanning 27 to 227 (GPVAGVDEAG…REARSLRLED (201 aa)) is the RNase H type-2 domain. D33, E34, and D128 together coordinate a divalent metal cation.

Belongs to the RNase HII family. Mn(2+) serves as cofactor. It depends on Mg(2+) as a cofactor.

The protein localises to the cytoplasm. It catalyses the reaction Endonucleolytic cleavage to 5'-phosphomonoester.. Its function is as follows. Endonuclease that specifically degrades the RNA of RNA-DNA hybrids. The protein is Ribonuclease HII of Frankia alni (strain DSM 45986 / CECT 9034 / ACN14a).